Here is a 661-residue protein sequence, read N- to C-terminus: MKDRFELVSKYQPQGDQPQAIEKLVKGIQEGRKHQTLMGATGTGKTFTVSNLIKEVNKPTLVIAHNKTLAGQLYSEFKEFFPNNAVEYFVSYYDYYQPEAYVPQTDTFIEKDASINDEIDKLRHSATSSLFERRDVIIIASVSCIYGLGSPEEYREMVVSLRPEMEIERNELLRKLVDIQYARNDIDFQRGTFRVRGDVVEIFPASRDEHCIRVEFFGDEIERIREVDALTGEILGDRDHVAIFPASHFVTRAEKMEKAILNIEQELEERLKVMHENGKLLEAQRLEQRTRYDLEMMREMGFCSGIENYSRHLTLRPPGSTPYTLLDYFPDDFMIVVDESHVTIPQVRGMFNGDQARKQVLVDHGFRLPSALDNRPLRFEEFEKHMHNIVYVSATPGPYEIEHTPEMIEQIIRPTGLLDPLIDVRPIEGQIDDLIGEIQARIERNERVLVTTLTKKMSEDLTDYLKEIGIKVNYLHSEIKTLERIEIIRDLRLGKHDVLIGINLLREGLDIPEVSLVAILDADKEGFLRSERSLIQTIGRAARNAEGRVIMYADKITNSMEIAINETKRRREQQERFNEIHGITPQTINKEIRDVIRATQAAEDKEEYKTKAAPKLAKMTKKERQKVVEQMEHEMKEAARALDFERAAELRDLLLELKAEG.

In terms of domain architecture, Helicase ATP-binding spans 26–181 (KGIQEGRKHQ…LLRKLVDIQY (156 aa)). Residue 39–46 (GATGTGKT) coordinates ATP. The Beta-hairpin signature appears at 92-115 (YYDYYQPEAYVPQTDTFIEKDASI). Residues 430–596 (QIDDLIGEIQ…TINKEIRDVI (167 aa)) form the Helicase C-terminal domain. The UVR domain occupies 625-660 (QKVVEQMEHEMKEAARALDFERAAELRDLLLELKAE).

This sequence belongs to the UvrB family. In terms of assembly, forms a heterotetramer with UvrA during the search for lesions. Interacts with UvrC in an incision complex.

The protein localises to the cytoplasm. Functionally, the UvrABC repair system catalyzes the recognition and processing of DNA lesions. A damage recognition complex composed of 2 UvrA and 2 UvrB subunits scans DNA for abnormalities. Upon binding of the UvrA(2)B(2) complex to a putative damaged site, the DNA wraps around one UvrB monomer. DNA wrap is dependent on ATP binding by UvrB and probably causes local melting of the DNA helix, facilitating insertion of UvrB beta-hairpin between the DNA strands. Then UvrB probes one DNA strand for the presence of a lesion. If a lesion is found the UvrA subunits dissociate and the UvrB-DNA preincision complex is formed. This complex is subsequently bound by UvrC and the second UvrB is released. If no lesion is found, the DNA wraps around the other UvrB subunit that will check the other stand for damage. The sequence is that of UvrABC system protein B from Bacillus velezensis (strain DSM 23117 / BGSC 10A6 / LMG 26770 / FZB42) (Bacillus amyloliquefaciens subsp. plantarum).